The following is a 733-amino-acid chain: Ferric aerobactin receptor (733 aa).

An N-terminal signal peptide occupies residues 1–25; the sequence is MMISKKYTLWALNPLLLTMMAPAVA. The short motif at 31–38 is the TonB box element; that stretch reads ETFVVSAN. The 111-residue stretch at 43–153 folds into the TBDR plug domain; that stretch reads TVAEMAQTTW…TGGLINIVTK (111 aa). Residues 158 to 733 form the TBDR beta-barrel domain; that stretch reads ETIMEFEAGT…TFGLNYSVLF (576 aa). The short motif at 716 to 733 is the TonB C-terminal box element; the sequence is YDYKGRGRTFGLNYSVLF.

This sequence belongs to the TonB-dependent receptor family.

The protein resides in the cell outer membrane. Its function is as follows. Receptor for aerobactin. This Klebsiella pneumoniae protein is Ferric aerobactin receptor (iutA).